The primary structure comprises 82 residues: Small ribosomal subunit protein bS18 (82 aa).

Residues 1 to 20 are disordered; sequence MSETSSAPVRRPFHRRRKTC.

It belongs to the bacterial ribosomal protein bS18 family. Part of the 30S ribosomal subunit. Forms a tight heterodimer with protein bS6.

Binds as a heterodimer with protein bS6 to the central domain of the 16S rRNA, where it helps stabilize the platform of the 30S subunit. This chain is Small ribosomal subunit protein bS18, found in Rhizobium johnstonii (strain DSM 114642 / LMG 32736 / 3841) (Rhizobium leguminosarum bv. viciae).